We begin with the raw amino-acid sequence, 123 residues long: Dihydroneopterin triphosphate 2'-epimerase (123 aa).

Belongs to the DHNA family. As to quaternary structure, homooctamer. Dimer of tetramers.

The enzyme catalyses 7,8-dihydroneopterin 3'-triphosphate = 7,8-dihydromonapterin 3'-triphosphate. In terms of biological role, catalyzes the epimerization of carbon 2' of the side chain of 7,8-dihydroneopterin triphosphate (H2NTP) to form 7,8-dihydromonapterin triphosphate (H2MTP). Is required for tetrahydromonapterin biosynthesis. The protein is Dihydroneopterin triphosphate 2'-epimerase of Pseudomonas aeruginosa (strain ATCC 15692 / DSM 22644 / CIP 104116 / JCM 14847 / LMG 12228 / 1C / PRS 101 / PAO1).